Reading from the N-terminus, the 419-residue chain is Imidazolonepropionase (419 aa).

2 residues coordinate Fe(3+): histidine 82 and histidine 84. The Zn(2+) site is built by histidine 82 and histidine 84. Residues arginine 91, tyrosine 154, and histidine 187 each coordinate 4-imidazolone-5-propanoate. Tyrosine 154 is an N-formimidoyl-L-glutamate binding site. Histidine 252 contacts Fe(3+). Position 252 (histidine 252) interacts with Zn(2+). 4-imidazolone-5-propanoate is bound at residue glutamate 255. A Fe(3+)-binding site is contributed by aspartate 326. Residue aspartate 326 coordinates Zn(2+). N-formimidoyl-L-glutamate-binding residues include asparagine 328 and glycine 330. Serine 331 lines the 4-imidazolone-5-propanoate pocket.

Belongs to the metallo-dependent hydrolases superfamily. HutI family. The cofactor is Zn(2+). Requires Fe(3+) as cofactor.

The protein localises to the cytoplasm. The enzyme catalyses 4-imidazolone-5-propanoate + H2O = N-formimidoyl-L-glutamate. Its pathway is amino-acid degradation; L-histidine degradation into L-glutamate; N-formimidoyl-L-glutamate from L-histidine: step 3/3. Catalyzes the hydrolytic cleavage of the carbon-nitrogen bond in imidazolone-5-propanoate to yield N-formimidoyl-L-glutamate. It is the third step in the universal histidine degradation pathway. This is Imidazolonepropionase from Clostridium tetani (strain Massachusetts / E88).